The following is a 465-amino-acid chain: Eukaryotic translation initiation factor 3 subunit M (465 aa).

The region spanning 215–383 (EEMSYNHVIL…GEFLVHRATY (169 aa)) is the PCI domain. The tract at residues 429–465 (AAAESGREGGARGGAGERRRGGGGHQGPREVDLVGGD) is disordered. Basic and acidic residues-rich tracts occupy residues 433–448 (SGREGGARGGAGERRR) and 455–465 (GPREVDLVGGD).

The protein belongs to the eIF-3 subunit M family. In terms of assembly, component of the eukaryotic translation initiation factor 3 (eIF-3) complex.

It is found in the cytoplasm. Its function is as follows. Component of the eukaryotic translation initiation factor 3 (eIF-3) complex, which is involved in protein synthesis of a specialized repertoire of mRNAs and, together with other initiation factors, stimulates binding of mRNA and methionyl-tRNAi to the 40S ribosome. The eIF-3 complex specifically targets and initiates translation of a subset of mRNAs involved in cell proliferation. This chain is Eukaryotic translation initiation factor 3 subunit M, found in Coccidioides immitis (strain RS) (Valley fever fungus).